Consider the following 378-residue polypeptide: MDSTTHGPRTHVPGRLFIGLMSGTSMDGADGVLVRLDGPRPEVLASASLPMPAALRDELFALNHAGANELERAALAANGLARLYARAVRQLLDQAGLQPGDVAAIGAHGQTVRHRPDLGYTLQLNAPALLAELAGIDVVADFRSRDVAAGGQGAPLVPPFHAALFAGGQARAVLNLGGIANVTLLEPGRPPRGFDTGPANVLLDAWCQRHTGQPYDADGRFAAQGQVLAGLLEHLIASEPWFALAPPKSTGRDLFNLDWLLARLQAFDGPAPQPQDVQATLQRLTARTVANAIDASAAAPRDVLVCGGGARNPGLMRELAYCLQRPVHPTDDAGVPAQWVEALAFAWLAQACLDRIPAGLPTVTGARAARVLGALYPA.

23 to 30 (GTSMDGAD) provides a ligand contact to ATP.

It belongs to the anhydro-N-acetylmuramic acid kinase family.

The catalysed reaction is 1,6-anhydro-N-acetyl-beta-muramate + ATP + H2O = N-acetyl-D-muramate 6-phosphate + ADP + H(+). The protein operates within amino-sugar metabolism; 1,6-anhydro-N-acetylmuramate degradation. It participates in cell wall biogenesis; peptidoglycan recycling. Functionally, catalyzes the specific phosphorylation of 1,6-anhydro-N-acetylmuramic acid (anhMurNAc) with the simultaneous cleavage of the 1,6-anhydro ring, generating MurNAc-6-P. Is required for the utilization of anhMurNAc either imported from the medium or derived from its own cell wall murein, and thus plays a role in cell wall recycling. The polypeptide is Anhydro-N-acetylmuramic acid kinase (Bordetella bronchiseptica (strain ATCC BAA-588 / NCTC 13252 / RB50) (Alcaligenes bronchisepticus)).